The sequence spans 118 residues: Phage-like element PBSX protein XkdH (118 aa).

To B.subtilis YqbH.

In Bacillus subtilis (strain 168), this protein is Phage-like element PBSX protein XkdH (xkdH).